The primary structure comprises 407 residues: Phosphopentomutase (407 aa).

The Mn(2+) site is built by Asp10, Asp306, His311, Asp347, His348, and His359.

The protein belongs to the phosphopentomutase family. Mn(2+) is required as a cofactor.

Its subcellular location is the cytoplasm. The catalysed reaction is 2-deoxy-alpha-D-ribose 1-phosphate = 2-deoxy-D-ribose 5-phosphate. It carries out the reaction alpha-D-ribose 1-phosphate = D-ribose 5-phosphate. The protein operates within carbohydrate degradation; 2-deoxy-D-ribose 1-phosphate degradation; D-glyceraldehyde 3-phosphate and acetaldehyde from 2-deoxy-alpha-D-ribose 1-phosphate: step 1/2. Its function is as follows. Isomerase that catalyzes the conversion of deoxy-ribose 1-phosphate (dRib-1-P) and ribose 1-phosphate (Rib-1-P) to deoxy-ribose 5-phosphate (dRib-5-P) and ribose 5-phosphate (Rib-5-P), respectively. The chain is Phosphopentomutase from Pectobacterium carotovorum subsp. carotovorum (strain PC1).